Reading from the N-terminus, the 436-residue chain is 3-ketoacyl-CoA thiolase (436 aa).

Residue C99 is the Acyl-thioester intermediate of the active site. Residues H392 and C422 each act as proton acceptor in the active site.

This sequence belongs to the thiolase-like superfamily. Thiolase family. As to quaternary structure, heterotetramer of two alpha chains (FadJ) and two beta chains (FadI).

Its subcellular location is the cytoplasm. The enzyme catalyses an acyl-CoA + acetyl-CoA = a 3-oxoacyl-CoA + CoA. The protein operates within lipid metabolism; fatty acid beta-oxidation. Its function is as follows. Catalyzes the final step of fatty acid oxidation in which acetyl-CoA is released and the CoA ester of a fatty acid two carbons shorter is formed. The sequence is that of 3-ketoacyl-CoA thiolase from Escherichia coli O81 (strain ED1a).